A 147-amino-acid polypeptide reads, in one-letter code: Transcriptional regulator MraZ (147 aa).

2 SpoVT-AbrB domains span residues 5–50 (AVAL…PLTA) and 79–122 (AQEE…SDAG).

Belongs to the MraZ family. As to quaternary structure, forms oligomers.

It is found in the cytoplasm. It localises to the nucleoid. This Azoarcus sp. (strain BH72) protein is Transcriptional regulator MraZ.